The primary structure comprises 252 residues: MMLHAQHMPGQPGAPSLVFLHGFSGDCREWQPVGEQFHGCSRLYIDLPGHGGSAAIPVGRFADVIRLLRATLISYNILKFWLVGYSLGGRVAMMAACQGIPGLCGLVVEGGHPGLQNEQARAERRLSDGRWAERFRREPLTEVFHDWYQQPVFASLTAQQRQALTALRSQNNGETLAAMLEATSLAAQPDLREALNALAFPFYYLCGERDSKFRALAQEVAATCHVIRNAGHNAHRENPAGVVDSLAQILRL.

Belongs to the AB hydrolase superfamily. MenH family. Monomer.

The enzyme catalyses 5-enolpyruvoyl-6-hydroxy-2-succinyl-cyclohex-3-ene-1-carboxylate = (1R,6R)-6-hydroxy-2-succinyl-cyclohexa-2,4-diene-1-carboxylate + pyruvate. Its pathway is quinol/quinone metabolism; 1,4-dihydroxy-2-naphthoate biosynthesis; 1,4-dihydroxy-2-naphthoate from chorismate: step 3/7. It participates in quinol/quinone metabolism; menaquinone biosynthesis. Functionally, catalyzes a proton abstraction reaction that results in 2,5-elimination of pyruvate from 2-succinyl-5-enolpyruvyl-6-hydroxy-3-cyclohexene-1-carboxylate (SEPHCHC) and the formation of 2-succinyl-6-hydroxy-2,4-cyclohexadiene-1-carboxylate (SHCHC). The sequence is that of 2-succinyl-6-hydroxy-2,4-cyclohexadiene-1-carboxylate synthase from Salmonella choleraesuis (strain SC-B67).